We begin with the raw amino-acid sequence, 431 residues long: Protein translocase subunit SecY (431 aa).

The next 10 helical transmembrane spans lie at 18-38 (IIFT…PVPH), 64-84 (LFNF…SIII), 116-136 (FTIV…NNMA), 146-166 (VGTY…LMWL), 175-195 (VGNG…PQTI), 214-234 (IIKV…VIFI), 262-282 (LPLK…AFIT), 309-329 (PVGM…YAFV), 369-389 (FVGS…VNIA), and 390-410 (GLPS…GVAL).

It belongs to the SecY/SEC61-alpha family. In terms of assembly, component of the Sec protein translocase complex. Heterotrimer consisting of SecY, SecE and SecG subunits. The heterotrimers can form oligomers, although 1 heterotrimer is thought to be able to translocate proteins. Interacts with the ribosome. Interacts with SecDF, and other proteins may be involved. Interacts with SecA.

The protein resides in the cell membrane. Its function is as follows. The central subunit of the protein translocation channel SecYEG. Consists of two halves formed by TMs 1-5 and 6-10. These two domains form a lateral gate at the front which open onto the bilayer between TMs 2 and 7, and are clamped together by SecE at the back. The channel is closed by both a pore ring composed of hydrophobic SecY resides and a short helix (helix 2A) on the extracellular side of the membrane which forms a plug. The plug probably moves laterally to allow the channel to open. The ring and the pore may move independently. This chain is Protein translocase subunit SecY, found in Bacillus licheniformis (strain ATCC 14580 / DSM 13 / JCM 2505 / CCUG 7422 / NBRC 12200 / NCIMB 9375 / NCTC 10341 / NRRL NRS-1264 / Gibson 46).